The following is a 276-amino-acid chain: Large ribosomal subunit protein uL2 (276 aa).

The tract at residues 211 to 276 (RNRHRGIRPQ…KLIISRRKGK (66 aa)) is disordered. Residues 230–240 (DHPHGGGEGKK) show a composition bias toward basic and acidic residues.

It belongs to the universal ribosomal protein uL2 family. In terms of assembly, part of the 50S ribosomal subunit. Forms a bridge to the 30S subunit in the 70S ribosome.

Its function is as follows. One of the primary rRNA binding proteins. Required for association of the 30S and 50S subunits to form the 70S ribosome, for tRNA binding and peptide bond formation. It has been suggested to have peptidyltransferase activity; this is somewhat controversial. Makes several contacts with the 16S rRNA in the 70S ribosome. The polypeptide is Large ribosomal subunit protein uL2 (Campylobacter jejuni subsp. doylei (strain ATCC BAA-1458 / RM4099 / 269.97)).